The following is a 103-amino-acid chain: Enhancer of rudimentary homolog (103 aa).

The protein belongs to the E(R) family. Homodimer.

May have a role in the cell cycle. The chain is Enhancer of rudimentary homolog from Caenorhabditis elegans.